A 367-amino-acid chain; its full sequence is Cyclic AMP-responsive element-binding protein 3-like protein 4 (367 aa).

The interval 1–52 (MELGCPELLEPPEDIFSTGSFLELGFNGPPSKVPGLQKSESDDFLNLFIDPN) is required for transcriptional activation. Residues 1 to 267 (MELGCPELLE…QTSSRAAQTS (267 aa)) are Cytoplasmic-facing. The segment at 58-81 (ETSPGSDSGVSEDPGSPAPQAPSS) is disordered. In terms of domain architecture, bZIP spans 189 to 252 (ILKKIRRKIR…ISLVAQVHQL (64 aa)). Residues 191-230 (KKIRRKIRNKQSAQDSRRRKKEYIDGLESRVAACSEQNQK) form a basic motif region. The interval 231 to 252 (LQRKVQELERQNISLVAQVHQL) is leucine-zipper. Residues 268 to 288 (TCVLILLFSLALIILPSFSPF) form a helical; Signal-anchor for type II membrane protein membrane-spanning segment. Residues 289-367 (QSQPEARSEG…IRGMVHADEM (79 aa)) are Lumenal-facing. Residue asparagine 338 is glycosylated (N-linked (GlcNAc...) asparagine).

This sequence belongs to the bZIP family. ATF subfamily. In terms of assembly, binds DNA as a dimer. Forms a heterodimer with CREM isoform Delta. In terms of processing, controlled by regulated intramembrane proteolysis (RIP). Following ER stress a fragment containing the cytoplasmic transcription factor domain is released by proteolysis. The cleavage seems to be performed sequentially by site-1 and site-2 proteases (PS1 and PS2). PS1 cleavage may be suppressed by a determinant in the C-terminal region.

The protein resides in the endoplasmic reticulum membrane. It is found in the nucleus. Transcriptional activator that may play a role in the unfolded protein response. Binds to the UPR element (UPRE) but not to CRE element. Preferentially binds DNA with to the consensus sequence 5'-T[GT]ACGT[GA][GT]-3' and has transcriptional activation activity from UPRE. Binds to NF-kappa-B site and has transcriptional activation activity from NF-kappa-B-containing regulatory elements. Increases the binding of CREM isoform Delta with CRE. The CREM isoform Delta-CREB3L4 heterodimer functions through CRE but not through UPRE and may recruit HIRA to CRE to regulate histone exchange. The chain is Cyclic AMP-responsive element-binding protein 3-like protein 4 (Creb3l4) from Rattus norvegicus (Rat).